A 299-amino-acid chain; its full sequence is tRNA uridine(34) hydroxylase (299 aa).

A Rhodanese domain is found at 132 to 226 (AGRPVVMLDT…YFEEVGGAHY (95 aa)). Cys186 acts as the Cysteine persulfide intermediate in catalysis.

It belongs to the TrhO family.

It catalyses the reaction uridine(34) in tRNA + AH2 + O2 = 5-hydroxyuridine(34) in tRNA + A + H2O. Catalyzes oxygen-dependent 5-hydroxyuridine (ho5U) modification at position 34 in tRNAs. In Burkholderia mallei (strain NCTC 10247), this protein is tRNA uridine(34) hydroxylase.